Reading from the N-terminus, the 242-residue chain is Biosynthetic peptidoglycan transglycosylase (242 aa).

The chain crosses the membrane as a helical span at residues 19–39 (LMVVLAVFWGGGIALFSVAPV).

The protein belongs to the glycosyltransferase 51 family.

Its subcellular location is the cell inner membrane. It carries out the reaction [GlcNAc-(1-&gt;4)-Mur2Ac(oyl-L-Ala-gamma-D-Glu-L-Lys-D-Ala-D-Ala)](n)-di-trans,octa-cis-undecaprenyl diphosphate + beta-D-GlcNAc-(1-&gt;4)-Mur2Ac(oyl-L-Ala-gamma-D-Glu-L-Lys-D-Ala-D-Ala)-di-trans,octa-cis-undecaprenyl diphosphate = [GlcNAc-(1-&gt;4)-Mur2Ac(oyl-L-Ala-gamma-D-Glu-L-Lys-D-Ala-D-Ala)](n+1)-di-trans,octa-cis-undecaprenyl diphosphate + di-trans,octa-cis-undecaprenyl diphosphate + H(+). Its pathway is cell wall biogenesis; peptidoglycan biosynthesis. In terms of biological role, peptidoglycan polymerase that catalyzes glycan chain elongation from lipid-linked precursors. This chain is Biosynthetic peptidoglycan transglycosylase, found in Escherichia coli O139:H28 (strain E24377A / ETEC).